A 273-amino-acid polypeptide reads, in one-letter code: Inositol monophosphatase 1 (273 aa).

4 residues coordinate Mg(2+): glutamate 71, aspartate 91, valine 93, and aspartate 94. Glutamate 71 serves as a coordination point for substrate. Residues 93–96 (VDGT), 194–196 (GSC), and aspartate 221 contribute to the substrate site. Residue aspartate 221 participates in Mg(2+) binding.

Belongs to the inositol monophosphatase superfamily. Requires Mg(2+) as cofactor. As to expression, expressed in seedlings, flowers, young and matures green fruits. Detected in roots and stems.

It catalyses the reaction a myo-inositol phosphate + H2O = myo-inositol + phosphate. Its pathway is polyol metabolism; myo-inositol biosynthesis; myo-inositol from D-glucose 6-phosphate: step 2/2. In terms of biological role, responsible for the provision of inositol required for synthesis of phosphatidylinositol and polyphosphoinositides. In Solanum lycopersicum (Tomato), this protein is Inositol monophosphatase 1 (IMP1).